A 180-amino-acid polypeptide reads, in one-letter code: Cytokinin-beta-glucosidase 3 (180 aa).

Functionally, hydrolyzes cytokinin glucosides thus liberating free cytokinins. The sequence is that of Cytokinin-beta-glucosidase 3 (ROLC3) from Panax ginseng (Korean ginseng).